A 155-amino-acid polypeptide reads, in one-letter code: Regulatory protein RecX (155 aa).

The protein belongs to the RecX family.

It is found in the cytoplasm. Its function is as follows. Modulates RecA activity. The sequence is that of Regulatory protein RecX from Vibrio parahaemolyticus serotype O3:K6 (strain RIMD 2210633).